The primary structure comprises 382 residues: Rubredoxin-NAD(+) reductase (382 aa).

Residues 9–12 (TGLA), 33–34 (TA), Lys42, Val80, Glu156, Asp275, Val287, and Lys318 each bind FAD.

It belongs to the FAD-dependent oxidoreductase family. As to quaternary structure, homodimer. FAD serves as cofactor.

The protein resides in the cytoplasm. The enzyme catalyses 2 reduced [rubredoxin] + NAD(+) + H(+) = 2 oxidized [rubredoxin] + NADH. It functions in the pathway hydrocarbon metabolism; alkane degradation. Functionally, involved in the hydrocarbon hydroxylating system, which transfers electrons from NADH to rubredoxin reductase and then through rubredoxin to alkane 1 monooxygenase. The sequence is that of Rubredoxin-NAD(+) reductase (rubB) from Alcanivorax borkumensis (strain ATCC 700651 / DSM 11573 / NCIMB 13689 / SK2).